The primary structure comprises 155 residues: SsrA-binding protein (155 aa).

This sequence belongs to the SmpB family.

It localises to the cytoplasm. Required for rescue of stalled ribosomes mediated by trans-translation. Binds to transfer-messenger RNA (tmRNA), required for stable association of tmRNA with ribosomes. tmRNA and SmpB together mimic tRNA shape, replacing the anticodon stem-loop with SmpB. tmRNA is encoded by the ssrA gene; the 2 termini fold to resemble tRNA(Ala) and it encodes a 'tag peptide', a short internal open reading frame. During trans-translation Ala-aminoacylated tmRNA acts like a tRNA, entering the A-site of stalled ribosomes, displacing the stalled mRNA. The ribosome then switches to translate the ORF on the tmRNA; the nascent peptide is terminated with the 'tag peptide' encoded by the tmRNA and targeted for degradation. The ribosome is freed to recommence translation, which seems to be the essential function of trans-translation. The chain is SsrA-binding protein from Streptococcus pyogenes serotype M4 (strain MGAS10750).